Consider the following 173-residue polypeptide: MEEMPLRESSPQRAERCKKSWLLCIVALLLMLLCSLGTLIYTSLKPTAIESCMVKFELSSSKWHMTSPKPHCVNTTSDGKLKILQSGTYLIYGQVIPVDKKYIKDNAPFVVQIYKKNDVLQTLMNDFQILPIGGVYELHAGDNIYLKFNSKDHIQKTNTYWGIILMPDLPFIS.

Over methionine 1 to serine 20 the chain is Cytoplasmic. The chain crosses the membrane as a helical; Signal-anchor for type II membrane protein span at residues tryptophan 21–tyrosine 41. One can recognise a THD domain in the interval isoleucine 40–methionine 166. The Extracellular segment spans residues threonine 42 to serine 173. Cysteine 52 and cysteine 72 are disulfide-bonded. Asparagine 74 carries N-linked (GlcNAc...) asparagine glycosylation.

The protein belongs to the tumor necrosis factor family. In terms of assembly, homotrimer. Homodimer. In terms of processing, N-glycosylated. As to expression, detected in immature and mature dendritic cells and in macrophages (at protein level). Detected in spleen, lung, heart, thymus, monocytes, macrophages, B-cells and dendritic cells.

It is found in the cell membrane. Its function is as follows. Cytokine that binds to TNFRSF18/AITR/GITR. Regulates T-cell responses. Can function as costimulator and lower the threshold for T-cell activation and T-cell proliferation. Important for interactions between activated T-lymphocytes and endothelial cells. Mediates activation of NF-kappa-B. Triggers increased phosphorylation of STAT1 and up-regulates expression of VCAM1 and ICAM1. Promotes leukocyte adhesion to endothelial cells. Regulates migration of monocytes from the splenic reservoir to sites of inflammation. The chain is Tumor necrosis factor ligand superfamily member 18 (Tnfsf18) from Mus musculus (Mouse).